Reading from the N-terminus, the 132-residue chain is Small ribosomal subunit protein uS8c (132 aa).

This sequence belongs to the universal ribosomal protein uS8 family. As to quaternary structure, part of the 30S ribosomal subunit.

The protein localises to the plastid. Its subcellular location is the chloroplast. One of the primary rRNA binding proteins, it binds directly to 16S rRNA central domain where it helps coordinate assembly of the platform of the 30S subunit. The sequence is that of Small ribosomal subunit protein uS8c (rps8) from Spirogyra maxima (Green alga).